We begin with the raw amino-acid sequence, 122 residues long: Flowering-promoting factor 1-like protein 3 (122 aa).

A disordered region spans residues 16 to 36 (ENPGSEESSSAGDGGGGGRRK).

Belongs to the FPF1 family.

This chain is Flowering-promoting factor 1-like protein 3, found in Oryza sativa subsp. japonica (Rice).